An 809-amino-acid polypeptide reads, in one-letter code: Sucrose synthase 2 (809 aa).

Residues 278 to 756 form a GT-B glycosyltransferase region; it reads MVFNVVILSP…GLQRIYERYT (479 aa).

This sequence belongs to the glycosyltransferase 1 family. Plant sucrose synthase subfamily.

The enzyme catalyses an NDP-alpha-D-glucose + D-fructose = a ribonucleoside 5'-diphosphate + sucrose + H(+). Sucrose-cleaving enzyme that provides UDP-glucose and fructose for various metabolic pathways. This chain is Sucrose synthase 2 (SUS2), found in Pisum sativum (Garden pea).